The primary structure comprises 948 residues: Bifunctional glutamine synthetase adenylyltransferase/adenylyl-removing enzyme (948 aa).

Residues 1–444 (MSLPSALLPT…VFATLIGEED (444 aa)) form an adenylyl removase region. Residues 452–948 (ARHFHELWDM…VIQAWQQWLG (497 aa)) are adenylyl transferase.

It belongs to the GlnE family. The cofactor is Mg(2+).

It carries out the reaction [glutamine synthetase]-O(4)-(5'-adenylyl)-L-tyrosine + phosphate = [glutamine synthetase]-L-tyrosine + ADP. It catalyses the reaction [glutamine synthetase]-L-tyrosine + ATP = [glutamine synthetase]-O(4)-(5'-adenylyl)-L-tyrosine + diphosphate. Its function is as follows. Involved in the regulation of glutamine synthetase GlnA, a key enzyme in the process to assimilate ammonia. When cellular nitrogen levels are high, the C-terminal adenylyl transferase (AT) inactivates GlnA by covalent transfer of an adenylyl group from ATP to specific tyrosine residue of GlnA, thus reducing its activity. Conversely, when nitrogen levels are low, the N-terminal adenylyl removase (AR) activates GlnA by removing the adenylyl group by phosphorolysis, increasing its activity. The regulatory region of GlnE binds the signal transduction protein PII (GlnB) which indicates the nitrogen status of the cell. The chain is Bifunctional glutamine synthetase adenylyltransferase/adenylyl-removing enzyme from Vibrio cholerae serotype O1 (strain ATCC 39315 / El Tor Inaba N16961).